Reading from the N-terminus, the 92-residue chain is Small ribosomal subunit protein bS20 (92 aa).

Positions 1-23 (MANTPSAKKRAKQAEKRRSHNAS) are disordered. The span at 7–20 (AKKRAKQAEKRRSH) shows a compositional bias: basic residues.

This sequence belongs to the bacterial ribosomal protein bS20 family.

Binds directly to 16S ribosomal RNA. The chain is Small ribosomal subunit protein bS20 from Pseudomonas fluorescens (strain SBW25).